Consider the following 1040-residue polypeptide: Multidrug resistance protein MdtB (1040 aa).

11 helical membrane passes run leucine 15–glycine 37, phenylalanine 345–leucine 362, alanine 367–leucine 389, leucine 396–asparagine 418, glycine 438–phenylalanine 460, phenylalanine 472–methionine 494, histidine 535–isoleucine 557, valine 867–isoleucine 889, leucine 909–valine 931, isoleucine 968–alanine 990, and methionine 1000–phenylalanine 1022.

It belongs to the resistance-nodulation-cell division (RND) (TC 2.A.6) family. MdtB subfamily. Part of a tripartite efflux system composed of MdtA, MdtB and MdtC. MdtB forms a heteromultimer with MdtC.

It localises to the cell inner membrane. In Salmonella typhi, this protein is Multidrug resistance protein MdtB.